Here is a 260-residue protein sequence, read N- to C-terminus: 3'-5' ssDNA/RNA exonuclease TatD (260 aa).

A divalent metal cation is bound by residues glutamate 91, histidine 127, and histidine 152.

Belongs to the metallo-dependent hydrolases superfamily. TatD-type hydrolase family. TatD subfamily. In terms of assembly, monomer. Mg(2+) serves as cofactor.

It localises to the cytoplasm. In terms of biological role, 3'-5' exonuclease that prefers single-stranded DNA and RNA. May play a role in the H(2)O(2)-induced DNA damage repair. This chain is 3'-5' ssDNA/RNA exonuclease TatD, found in Shigella flexneri serotype 5b (strain 8401).